A 287-amino-acid polypeptide reads, in one-letter code: F-actin-capping protein subunit beta (287 aa).

Residue Ser-2 is modified to N-acetylserine. Phosphoserine occurs at positions 85 and 92.

The protein belongs to the F-actin-capping protein beta subunit family. Component of the F-actin capping complex, composed of a heterodimer of an alpha and a beta subunit. Interacts with BSP1 (via C-terminus); leading to recruitment of the F-actin capping complex to actin cortical patches and the acomyosin contractile ring.

The protein localises to the cytoplasm. It is found in the cytoskeleton. It localises to the actin patch. Its subcellular location is the bud. The protein resides in the bud tip. Functionally, F-actin-capping proteins bind in a Ca(2+)-independent manner to the fast growing ends of actin filaments (barbed end) thereby blocking the exchange of subunits at these ends. Unlike other capping proteins (such as gelsolin and severin), these proteins do not sever actin filaments. This is F-actin-capping protein subunit beta (CAP2) from Saccharomyces cerevisiae (strain ATCC 204508 / S288c) (Baker's yeast).